The sequence spans 315 residues: Putative steroid dehydrogenase 2 (315 aa).

47-76 provides a ligand contact to NADP(+); the sequence is ASWAVVTGATDGIGKSYSFELARRGFNVYI. Tyr-202 is an active-site residue.

The protein belongs to the short-chain dehydrogenases/reductases (SDR) family. 17-beta-HSD 3 subfamily.

This is Putative steroid dehydrogenase 2 (stdh-2) from Caenorhabditis elegans.